A 994-amino-acid polypeptide reads, in one-letter code: Glycine dehydrogenase (decarboxylating), mitochondrial (994 aa).

A mitochondrion-targeting transit peptide spans 1 to 21; the sequence is MLKLLRNNGINKLKSNLIRNY. N6-(pyridoxal phosphate)lysine is present on Lys-742.

This sequence belongs to the GcvP family. As to quaternary structure, homodimer. The glycine cleavage system is composed of four proteins: P, T, L and H. Requires pyridoxal 5'-phosphate as cofactor.

It is found in the mitochondrion. The enzyme catalyses N(6)-[(R)-lipoyl]-L-lysyl-[glycine-cleavage complex H protein] + glycine + H(+) = N(6)-[(R)-S(8)-aminomethyldihydrolipoyl]-L-lysyl-[glycine-cleavage complex H protein] + CO2. Functionally, the glycine cleavage system catalyzes the degradation of glycine. The P protein binds the alpha-amino group of glycine through its pyridoxal phosphate cofactor; CO(2) is released and the remaining methylamine moiety is then transferred to the lipoamide cofactor of the H protein. This chain is Glycine dehydrogenase (decarboxylating), mitochondrial (gcvP), found in Dictyostelium discoideum (Social amoeba).